A 394-amino-acid polypeptide reads, in one-letter code: Na(+)/H(+) antiporter NhaA (394 aa).

11 helical membrane passes run 17–37, 59–79, 95–115, 124–144, 154–174, 177–197, 213–233, 261–281, 287–307, 328–348, and 363–383; these read ILLM…LAGV, LLLW…GLEV, SLPS…YLAF, VGWA…MALL, VFLL…IALF, TDLS…MVAL, FILW…GVII, FMIL…NMTL, PITL…VLLF, IIPV…IASL, and LGIL…LAKV.

It belongs to the NhaA Na(+)/H(+) (TC 2.A.33) antiporter family.

It localises to the cell inner membrane. The enzyme catalyses Na(+)(in) + 2 H(+)(out) = Na(+)(out) + 2 H(+)(in). Na(+)/H(+) antiporter that extrudes sodium in exchange for external protons. The sequence is that of Na(+)/H(+) antiporter NhaA from Shewanella frigidimarina (strain NCIMB 400).